The following is a 193-amino-acid chain: Bcl-2-binding component 3 (193 aa).

2 disordered regions span residues 1-31 (MARA…GRLM) and 71-131 (ALGG…VEEE). The residue at position 10 (Ser-10) is a Phosphoserine. Positions 137–151 (IGAQLRRMADDLNAQ) match the BH3 motif.

It belongs to the Bcl-2 family. In terms of assembly, interacts with MCL1 and BCL2A1. Interacts with BCL2 and BCL2L1/BCL-XL. Interacts (via BH3 domain) with NOL3 (via CARD domain); this interaction prevents BBC3 association with BCL2 and results in CASP8 activation.

Its subcellular location is the mitochondrion. In terms of biological role, essential mediator of p53/TP53-dependent and p53/TP53-independent apoptosis. Promotes partial unfolding of BCL2L1 and dissociation of BCL2L1 from p53/TP53, releasing the bound p53/TP53 to induce apoptosis. Regulates ER stress-induced neuronal apoptosis. The polypeptide is Bcl-2-binding component 3 (Bbc3) (Mus musculus (Mouse)).